The sequence spans 1100 residues: DNA-directed RNA polymerase subunit beta (1100 aa).

The segment at 1064-1100 (YEEDKEVDLMADVNQRRTPSRPTYESMSVGDIDDDDD) is disordered. Over residues 1079 to 1089 (RRTPSRPTYES) the composition is skewed to polar residues.

Belongs to the RNA polymerase beta chain family. In cyanobacteria the RNAP catalytic core is composed of 2 alpha, 1 beta, 1 beta', 1 gamma and 1 omega subunit. When a sigma factor is associated with the core the holoenzyme is formed, which can initiate transcription.

The enzyme catalyses RNA(n) + a ribonucleoside 5'-triphosphate = RNA(n+1) + diphosphate. DNA-dependent RNA polymerase catalyzes the transcription of DNA into RNA using the four ribonucleoside triphosphates as substrates. The polypeptide is DNA-directed RNA polymerase subunit beta (Synechococcus elongatus (strain ATCC 33912 / PCC 7942 / FACHB-805) (Anacystis nidulans R2)).